A 251-amino-acid chain; its full sequence is Triosephosphate isomerase (251 aa).

Residue 9–11 participates in substrate binding; that stretch reads NWK. His-95 functions as the Electrophile in the catalytic mechanism. Glu-167 functions as the Proton acceptor in the catalytic mechanism. Residues Gly-173, Ser-213, and 234 to 235 each bind substrate; that span reads GG. Ser-213 is subject to Phosphoserine.

Belongs to the triosephosphate isomerase family. In terms of assembly, homodimer.

It is found in the cytoplasm. It catalyses the reaction D-glyceraldehyde 3-phosphate = dihydroxyacetone phosphate. It participates in carbohydrate biosynthesis; gluconeogenesis. Its pathway is carbohydrate degradation; glycolysis; D-glyceraldehyde 3-phosphate from glycerone phosphate: step 1/1. In terms of biological role, involved in the gluconeogenesis. Catalyzes stereospecifically the conversion of dihydroxyacetone phosphate (DHAP) to D-glyceraldehyde-3-phosphate (G3P). This chain is Triosephosphate isomerase, found in Bacillus cereus (strain AH820).